Consider the following 401-residue polypeptide: Dihydrolipoyllysine-residue succinyltransferase component of 2-oxoglutarate dehydrogenase complex (401 aa).

One can recognise a Lipoyl-binding domain in the interval 2-77 (SVKIIVPSLG…AVGEEIGEIN (76 aa)). Lysine 43 carries the N6-lipoyllysine modification. A Peripheral subunit-binding (PSBD) domain is found at 115-152 (ILAPSVQKLVTENKLDPNNIKGTGRDGRITKGDVLETI). Active-site residues include histidine 372 and aspartate 376.

This sequence belongs to the 2-oxoacid dehydrogenase family. Forms a 24-polypeptide structural core with octahedral symmetry. Part of the 2-oxoglutarate dehydrogenase (OGDH) complex composed of E1 (2-oxoglutarate dehydrogenase), E2 (dihydrolipoamide succinyltransferase) and E3 (dihydrolipoamide dehydrogenase); the complex contains multiple copies of the three enzymatic components (E1, E2 and E3). Requires (R)-lipoate as cofactor.

The catalysed reaction is N(6)-[(R)-dihydrolipoyl]-L-lysyl-[protein] + succinyl-CoA = N(6)-[(R)-S(8)-succinyldihydrolipoyl]-L-lysyl-[protein] + CoA. It participates in amino-acid degradation; L-lysine degradation via saccharopine pathway; glutaryl-CoA from L-lysine: step 6/6. E2 component of the 2-oxoglutarate dehydrogenase (OGDH) complex which catalyzes the second step in the conversion of 2-oxoglutarate to succinyl-CoA and CO(2). The polypeptide is Dihydrolipoyllysine-residue succinyltransferase component of 2-oxoglutarate dehydrogenase complex (sucB) (Rickettsia felis (strain ATCC VR-1525 / URRWXCal2) (Rickettsia azadi)).